Consider the following 129-residue polypeptide: Putative membrane protein insertion efficiency factor (129 aa).

Belongs to the UPF0161 family.

The protein resides in the cell inner membrane. Could be involved in insertion of integral membrane proteins into the membrane. The sequence is that of Putative membrane protein insertion efficiency factor from Rhodopseudomonas palustris (strain ATCC BAA-98 / CGA009).